The sequence spans 137 residues: Small ribosomal subunit protein bS6 (137 aa).

The interval Glu113 to Lys137 is disordered. Residues Ile126–Lys137 are compositionally biased toward basic and acidic residues.

The protein belongs to the bacterial ribosomal protein bS6 family.

Functionally, binds together with bS18 to 16S ribosomal RNA. The sequence is that of Small ribosomal subunit protein bS6 from Mycoplasma capricolum subsp. capricolum (strain California kid / ATCC 27343 / NCTC 10154).